Here is a 158-residue protein sequence, read N- to C-terminus: Protein Smg homolog (158 aa).

It belongs to the Smg family.

The chain is Protein Smg homolog from Vibrio atlanticus (strain LGP32) (Vibrio splendidus (strain Mel32)).